A 179-amino-acid chain; its full sequence is Inner membrane-spanning protein YciB (179 aa).

Transmembrane regions (helical) follow at residues 22-42 (IYAA…YTWI), 50-70 (MALI…FFHN), 76-96 (WKVT…QWVM), 121-141 (IAWA…AFWM), and 149-169 (FKVF…GVYI).

Belongs to the YciB family.

The protein resides in the cell inner membrane. In terms of biological role, plays a role in cell envelope biogenesis, maintenance of cell envelope integrity and membrane homeostasis. In Enterobacter sp. (strain 638), this protein is Inner membrane-spanning protein YciB.